A 581-amino-acid chain; its full sequence is MCEKARVIVRMLQGCNSMKKLRKIHSHVIINGLQHHPSIFNHLLRFCAVSVTGSLSHAQLLFDHFDSDPSTSDWNYLIRGFSNSSSPLNSILFYNRMLLSSVSRPDLFTFNFALKSCERIKSIPKCLEIHGSVIRSGFLDDAIVATSLVRCYSANGSVEIASKVFDEMPVRDLVSWNVMICCFSHVGLHNQALSMYKRMGNEGVCGDSYTLVALLSSCAHVSALNMGVMLHRIACDIRCESCVFVSNALIDMYAKCGSLENAIGVFNGMRKRDVLTWNSMIIGYGVHGHGVEAISFFRKMVASGVRPNAITFLGLLLGCSHQGLVKEGVEHFEIMSSQFHLTPNVKHYGCMVDLYGRAGQLENSLEMIYASSCHEDPVLWRTLLGSCKIHRNLELGEVAMKKLVQLEAFNAGDYVLMTSIYSAANDAQAFASMRKLIRSHDLQTVPGWSWIEIGDQVHKFVVDDKMHPESAVIYSELGEVINRAILAGYKPEDSNRTAPTLSDRCLGSADTSHSEKLAIAYGLMRTTAGTTLRITKNLRVCRDCHSFTKYVSKAFNREIIVRDRVRFHHFADGICSCNDYW.

PPR repeat units lie at residues 70–104, 106–140, 141–171, 172–206, 207–241, 242–272, 273–307, 308–338, and 344–378; these read STSD…SVSR, DLFT…GFLD, DAIV…MPVR, DLVS…GVCG, DSYT…RCES, CVFV…MRKR, DVLT…GVRP, NAIT…MSSQ, and NVKH…EDPV. The interval 379–454 is type E motif; it reads LWRTLLGSCK…VPGWSWIEIG (76 aa). The tract at residues 455–485 is type E(+) motif; that stretch reads DQVHKFVVDDKMHPESAVIYSELGEVINRAI. The segment at 486–581 is type DYW motif; it reads LAGYKPEDSN…DGICSCNDYW (96 aa).

This sequence belongs to the PPR family. PCMP-H subfamily.

The protein is Pentatricopeptide repeat-containing protein At3g56550 (PCMP-H80) of Arabidopsis thaliana (Mouse-ear cress).